Reading from the N-terminus, the 203-residue chain is Translation initiation factor IF-3 (203 aa).

The disordered stretch occupies residues 168 to 203 (QLSPKKKESATKKPATPKPATPAAVKAEKPAGDNEE). Positions 193–203 (KAEKPAGDNEE) are enriched in basic and acidic residues.

It belongs to the IF-3 family. As to quaternary structure, monomer.

It localises to the cytoplasm. In terms of biological role, IF-3 binds to the 30S ribosomal subunit and shifts the equilibrium between 70S ribosomes and their 50S and 30S subunits in favor of the free subunits, thus enhancing the availability of 30S subunits on which protein synthesis initiation begins. The protein is Translation initiation factor IF-3 of Bacteroides fragilis (strain ATCC 25285 / DSM 2151 / CCUG 4856 / JCM 11019 / LMG 10263 / NCTC 9343 / Onslow / VPI 2553 / EN-2).